A 230-amino-acid chain; its full sequence is Orotidine 5'-phosphate decarboxylase (230 aa).

Substrate-binding positions include D11, K34, D61 to T70, T117, R179, Q188, G208, and R209. K63 (proton donor) is an active-site residue.

It belongs to the OMP decarboxylase family. Type 1 subfamily. Homodimer.

The catalysed reaction is orotidine 5'-phosphate + H(+) = UMP + CO2. It participates in pyrimidine metabolism; UMP biosynthesis via de novo pathway; UMP from orotate: step 2/2. In terms of biological role, catalyzes the decarboxylation of orotidine 5'-monophosphate (OMP) to uridine 5'-monophosphate (UMP). This Streptococcus pyogenes serotype M6 (strain ATCC BAA-946 / MGAS10394) protein is Orotidine 5'-phosphate decarboxylase.